A 491-amino-acid chain; its full sequence is Ketol-acid reductoisomerase (NADP(+)) (491 aa).

Residues Ala-15–Ser-208 enclose the KARI N-terminal Rossmann domain. Residues Cys-45–Gln-48, Arg-68, Arg-76, Ser-78, and Asp-108–Gln-110 contribute to the NADP(+) site. Residue His-132 is part of the active site. Residue Gly-158 participates in NADP(+) binding. KARI C-terminal knotted domains lie at Ser-209–Gln-344 and Tyr-345–Met-484. Asp-217, Glu-221, Glu-389, and Glu-393 together coordinate Mg(2+). Ser-414 is a binding site for substrate.

It belongs to the ketol-acid reductoisomerase family. Mg(2+) serves as cofactor.

The catalysed reaction is (2R)-2,3-dihydroxy-3-methylbutanoate + NADP(+) = (2S)-2-acetolactate + NADPH + H(+). It carries out the reaction (2R,3R)-2,3-dihydroxy-3-methylpentanoate + NADP(+) = (S)-2-ethyl-2-hydroxy-3-oxobutanoate + NADPH + H(+). The protein operates within amino-acid biosynthesis; L-isoleucine biosynthesis; L-isoleucine from 2-oxobutanoate: step 2/4. It functions in the pathway amino-acid biosynthesis; L-valine biosynthesis; L-valine from pyruvate: step 2/4. Involved in the biosynthesis of branched-chain amino acids (BCAA). Catalyzes an alkyl-migration followed by a ketol-acid reduction of (S)-2-acetolactate (S2AL) to yield (R)-2,3-dihydroxy-isovalerate. In the isomerase reaction, S2AL is rearranged via a Mg-dependent methyl migration to produce 3-hydroxy-3-methyl-2-ketobutyrate (HMKB). In the reductase reaction, this 2-ketoacid undergoes a metal-dependent reduction by NADPH to yield (R)-2,3-dihydroxy-isovalerate. This Escherichia coli O6:K15:H31 (strain 536 / UPEC) protein is Ketol-acid reductoisomerase (NADP(+)).